The primary structure comprises 630 residues: MASHLFTRSRISLLKTLKPNPFTSASPIRAISGTPFLSQDPLLATESTDHDPSNHQSTSTPLPPNPATGSPLYQENWRSPIPNTPSFNQSLVPLGFLNQAPAPRIRALSETLDMNSLLNMFADWTASQRWSDMKQLFEVWVRSLDKNGKPNKPDVNLYNHYLRANLMMGASAGDMLDLVAPMEEFSVEPNTASYNLVLKAMYQARETEAAMKLLERMLLLGKDSLPDDESYDLVIGMHFGVGKNDEAMKVMDTALKSGYMLSTSVFTECVRSCVAKGRTDTLVSIIERCKAVDRNKSLCPSWILCNYIAEVAIQEDNSKLAFYAFEFMFKWITRGEMARPSVIFSVDEGLVVAGLASAARTCSSSLVEGSWTILKQSLRGRKAANPASYIAKINAYASLGNLQKAFTSLHELESAYADSEKEVVEEMLSPFTSLYPLVVACSKKGFETLDEVYFQLESLSQGDTPYKSVAALNCIILGCANTWDLDRAYQTFEAISASFGLTPNIDSYNALLYAFGKVKKTFEATNVFEHLVSIGVKPDSRTYSLLVDAHLINRDPKSALTVVDDMIKAGFEPSRETLKKLRRRCVREMDDENDDQVEALAKKFQIRMGSENRRNMLFNIDYSRGRALNN.

Residues 1 to 115 (MASHLFTRSR…RALSETLDMN (115 aa)) constitute a mitochondrion transit peptide. Residues 42–79 (LLATESTDHDPSNHQSTSTPLPPNPATGSPLYQENWRS) are disordered. A compositionally biased stretch (polar residues) spans 67–77 (ATGSPLYQENW). PPR repeat units follow at residues 154–189 (DVNL…SVEP), 190–224 (NTAS…GKDS), 227–261 (DDES…GYML), 468–503 (SVAA…GLTP), 504–538 (NIDS…GVKP), and 539–573 (DSRT…GFEP).

The protein belongs to the PPR family. P subfamily.

It localises to the mitochondrion. The polypeptide is Pentatricopeptide repeat-containing protein At1g26460, mitochondrial (Arabidopsis thaliana (Mouse-ear cress)).